Here is a 192-residue protein sequence, read N- to C-terminus: GTP cyclohydrolase 1 (192 aa).

Zn(2+)-binding residues include cysteine 82, histidine 85, and cysteine 153.

It belongs to the GTP cyclohydrolase I family. Toroid-shaped homodecamer, composed of two pentamers of five dimers.

The enzyme catalyses GTP + H2O = 7,8-dihydroneopterin 3'-triphosphate + formate + H(+). It participates in cofactor biosynthesis; 7,8-dihydroneopterin triphosphate biosynthesis; 7,8-dihydroneopterin triphosphate from GTP: step 1/1. The chain is GTP cyclohydrolase 1 from Rickettsia bellii (strain OSU 85-389).